The chain runs to 398 residues: Succinate--CoA ligase [ADP-forming] subunit beta (398 aa).

One can recognise an ATP-grasp domain in the interval 9–254 (KALLHEFGVP…ETEEDAKEIE (246 aa)). Residues K46, 53–55 (GRG), E109, S112, and E117 contribute to the ATP site. Mg(2+)-binding residues include N209 and D223. Substrate-binding positions include N274 and 331 to 333 (GIM).

The protein belongs to the succinate/malate CoA ligase beta subunit family. As to quaternary structure, heterotetramer of two alpha and two beta subunits. Requires Mg(2+) as cofactor.

The enzyme catalyses succinate + ATP + CoA = succinyl-CoA + ADP + phosphate. It carries out the reaction GTP + succinate + CoA = succinyl-CoA + GDP + phosphate. It functions in the pathway carbohydrate metabolism; tricarboxylic acid cycle; succinate from succinyl-CoA (ligase route): step 1/1. Its function is as follows. Succinyl-CoA synthetase functions in the citric acid cycle (TCA), coupling the hydrolysis of succinyl-CoA to the synthesis of either ATP or GTP and thus represents the only step of substrate-level phosphorylation in the TCA. The beta subunit provides nucleotide specificity of the enzyme and binds the substrate succinate, while the binding sites for coenzyme A and phosphate are found in the alpha subunit. This Bradyrhizobium sp. (strain ORS 278) protein is Succinate--CoA ligase [ADP-forming] subunit beta.